An 885-amino-acid chain; its full sequence is Translation initiation factor IF-2 (885 aa).

2 disordered regions span residues Ile-55–Thr-150 and Asn-269–Thr-300. Residues Glu-65–Leu-146 are compositionally biased toward basic and acidic residues. Basic residues predominate over residues Arg-281–Pro-290. Positions Pro-384–Lys-553 constitute a tr-type G domain. A G1 region spans residues Gly-393–Thr-400. Gly-393–Thr-400 provides a ligand contact to GTP. The interval Gly-418–His-422 is G2. Positions Asp-439 to Gly-442 are G3. GTP is bound by residues Asp-439 to His-443 and Asn-493 to Asp-496. Residues Asn-493–Asp-496 are G4. A G5 region spans residues Ser-529–Lys-531.

It belongs to the TRAFAC class translation factor GTPase superfamily. Classic translation factor GTPase family. IF-2 subfamily.

It is found in the cytoplasm. One of the essential components for the initiation of protein synthesis. Protects formylmethionyl-tRNA from spontaneous hydrolysis and promotes its binding to the 30S ribosomal subunits. Also involved in the hydrolysis of GTP during the formation of the 70S ribosomal complex. This Campylobacter concisus (strain 13826) protein is Translation initiation factor IF-2.